We begin with the raw amino-acid sequence, 513 residues long: Plexin domain-containing protein 2 (513 aa).

A signal peptide spans 1–24 (MGARSESLVGVVLLFQLLADRLWC). The Extracellular segment spans residues 25–438 (AATASDSLYD…AEMKTGTLHT (414 aa)). Residues asparagine 88, asparagine 145, asparagine 198, asparagine 206, asparagine 222, and asparagine 330 are each glycosylated (N-linked (GlcNAc...) asparagine). Residues 312–357 (TCLQFNSCSSCVSSMIGFNCSWCNIPQRCSSGFDRHRQDWVENGCT) form the PSI domain. Residues 439–459 (GLIIGILILVLLIITAILVAV) form a helical membrane-spanning segment. Topologically, residues 460–513 (YMYHHPTSSASLFLIERRPSRWPAMKFRRGSGHPAYAEVEPIGEKEGFIVSEQC) are cytoplasmic.

It belongs to the plexin family.

The protein resides in the membrane. The sequence is that of Plexin domain-containing protein 2 (plxdc2) from Xenopus laevis (African clawed frog).